We begin with the raw amino-acid sequence, 435 residues long: Eukaryotic translation initiation factor 3 subunit E (435 aa).

The PCI domain occupies 219–392 (FFNHPKGRDL…GHVVMGTQPL (174 aa)).

The protein belongs to the eIF-3 subunit E family. Component of the eukaryotic translation initiation factor 3 (eIF-3) complex. The eIF-3 complex interacts with pix. Interacts with mxt. As to expression, expression levels in females and males are relatively similar 10 days after oviposition, however by day 15 expression is higher in gravid females than in males (at protein level).

It localises to the cytoplasm. It is found in the microsome. The protein resides in the endoplasmic reticulum. Component of the eukaryotic translation initiation factor 3 (eIF-3) complex, which is involved in protein synthesis of a specialized repertoire of mRNAs and, together with other initiation factors, stimulates binding of mRNA and methionyl-tRNAi to the 40S ribosome. The eIF-3 complex specifically targets and initiates translation of a subset of mRNAs involved in cell proliferation. In addition to its role in the eIF-3 complex, also functions in protein ubiquitination and degradation. During mitosis required for regulating mitotic microtubule growth and kinetochore formation, and consequently is required for satisfying the spindle assembly checkpoint (SAC) during metaphase to prevent delays in mitotic progression. This is likely by promoting the ubiquitination and degradation of Klp67A, a kinesin-like protein that suppresses microtubule polymerization at plus ends. Acts in the COP9 signalosome (CSN) mediated regulation of cullin neddylation by promoting Cul1 and Cul3 neddylation and negatively regulating the CSN complex subunit CSN5. In Drosophila melanogaster (Fruit fly), this protein is Eukaryotic translation initiation factor 3 subunit E.